A 360-amino-acid chain; its full sequence is Phospho-N-acetylmuramoyl-pentapeptide-transferase (360 aa).

The next 10 membrane-spanning stretches (helical) occupy residues R25–I45, T73–L93, Y97–Y117, W132–A152, V168–S188, G199–S219, A236–F256, V263–I283, V288–V308, and V338–K358.

It belongs to the glycosyltransferase 4 family. MraY subfamily. It depends on Mg(2+) as a cofactor.

Its subcellular location is the cell inner membrane. The catalysed reaction is UDP-N-acetyl-alpha-D-muramoyl-L-alanyl-gamma-D-glutamyl-meso-2,6-diaminopimeloyl-D-alanyl-D-alanine + di-trans,octa-cis-undecaprenyl phosphate = di-trans,octa-cis-undecaprenyl diphospho-N-acetyl-alpha-D-muramoyl-L-alanyl-D-glutamyl-meso-2,6-diaminopimeloyl-D-alanyl-D-alanine + UMP. Its pathway is cell wall biogenesis; peptidoglycan biosynthesis. Catalyzes the initial step of the lipid cycle reactions in the biosynthesis of the cell wall peptidoglycan: transfers peptidoglycan precursor phospho-MurNAc-pentapeptide from UDP-MurNAc-pentapeptide onto the lipid carrier undecaprenyl phosphate, yielding undecaprenyl-pyrophosphoryl-MurNAc-pentapeptide, known as lipid I. The sequence is that of Phospho-N-acetylmuramoyl-pentapeptide-transferase from Ectopseudomonas mendocina (strain ymp) (Pseudomonas mendocina).